A 223-amino-acid chain; its full sequence is Large ribosomal subunit protein uL4c (223 aa).

The interval 61-96 (TKTRSEVEGGGKKPWKQKGTGNARAGSSNSPLWKGG) is disordered.

This sequence belongs to the universal ribosomal protein uL4 family. As to quaternary structure, part of the 50S ribosomal subunit.

It localises to the plastid. Its subcellular location is the chloroplast. In terms of biological role, probably binds the 23S rRNA. This chain is Large ribosomal subunit protein uL4c (rpl4), found in Guillardia theta (Cryptophyte).